The chain runs to 953 residues: Anion exchange protein 4 (953 aa).

The tract at residues 20–41 is disordered; it reads SEQLDGDLGPGSGLDGPSDIDN. Helical transmembrane passes span 385 to 405, 413 to 433, 470 to 490, and 501 to 521; these read AVLY…GLLG, GVLE…LMAG, VGIW…SLLV, and FCAL…LNLI. A membrane (anion exchange) region spans residues 385 to 953; the sequence is AVLYIYLATV…KAPEINISVN (569 aa). 2 N-linked (GlcNAc...) asparagine glycosylation sites follow: Asn-546 and Asn-570. 7 consecutive transmembrane segments (helical) span residues 594–614, 635–655, 682–702, 728–748, 785–805, 807–827, and 869–889; these read VPDI…CAIA, FSSV…GLAT, PWWL…LIFM, LFCV…WYVS, GLVV…LKFI, MPVL…SMQF, and LWVI…LGLV. A compositionally biased stretch (basic and acidic residues) spans 916 to 927; the sequence is KTIPENRPEPEH. Residues 916 to 938 form a disordered region; the sequence is KTIPENRPEPEHLFSGNDSENSE. 2 N-linked (GlcNAc...) asparagine glycosylation sites follow: Asn-932 and Asn-949.

Belongs to the anion exchanger (TC 2.A.31) family. Expressed in kidney and gastrointestinal tract. In kidney, it is highly expressed in the cortex, expressed at intermediate level in the outer medulla and not expressed in the inner medulla. It is expressed in the cecum, while it is absent in other segments of gastrointestinal tract. Highly expressed in the cortical collecting duct (CCD). Expressed in both alpha-intercalated cells and beta-intercalated cells in the CCD (at protein level).

Its subcellular location is the basolateral cell membrane. The enzyme catalyses 2 hydrogencarbonate(out) + chloride(in) + Na(+)(out) = 2 hydrogencarbonate(in) + chloride(out) + Na(+)(in). The catalysed reaction is K(+)(in) + 2 hydrogencarbonate(in) + chloride(out) = K(+)(out) + 2 hydrogencarbonate(out) + chloride(in). It carries out the reaction Li(+)(in) + 2 hydrogencarbonate(in) + chloride(out) = Li(+)(out) + 2 hydrogencarbonate(out) + chloride(in). It catalyses the reaction Rb(+)(in) + 2 hydrogencarbonate(in) + chloride(out) = Rb(+)(out) + 2 hydrogencarbonate(out) + chloride(in). The enzyme catalyses Cs(+)(in) + 2 hydrogencarbonate(in) + chloride(out) = Cs(+)(out) + 2 hydrogencarbonate(out) + chloride(in). 4,4'-diisothiocyanatodihydrostilbene-2,2'- disulfonic acid (H2DIDS) potently inhibits chloride/hydrogencarbonate antiporter activity with 50% inhibition at about 5 uM. Completely inhibits chloride/hydrogencarbonate antiporter activity at 200 uM of 4,4'-diisothiocyano-trans-stilbene-2,2'-disulfonic acid (DIDS). Its function is as follows. Electroneutral Cl(-)/HCO3(-) antiporter that favors chloride ion entry and efflux of hydrogencarbonate and sodium ion across the basolateral membrane and may participate in salivary secretion. Also mediates Cl(-)/HCO3(-) exchange activity in the presence of K(+) as well as Cs(+), Li(+), and Rb(+). Does not contribute to Cl(-)/HCO3(-) exchanger in the apical membrane of the upper villous epithelium. The sequence is that of Anion exchange protein 4 from Rattus norvegicus (Rat).